Reading from the N-terminus, the 388-residue chain is Mitochondrial distribution and morphology protein 12 (388 aa).

The 388-residue stretch at 1 to 388 folds into the SMP-LTD domain; sequence MSLDINWSLL…VFPNFHTVAL (388 aa). Disordered stretches follow at residues 75-101 and 209-249; these read DDEG…RNEA and PMSI…KVSS. Over residues 83–101 the composition is skewed to basic and acidic residues; it reads EEKQREKEREERDKLRNEA. Over residues 234 to 243 the composition is skewed to pro residues; it reads PSPPAHPAGL.

Belongs to the MDM12 family. In terms of assembly, component of the ER-mitochondria encounter structure (ERMES) or MDM complex, composed of MMM1, MDM10, MDM12 and MDM34. An MMM1 homodimer associates with one molecule of MDM12 on each side in a pairwise head-to-tail manner, and the SMP-LTD domains of MMM1 and MDM12 generate a continuous hydrophobic tunnel for phospholipid trafficking.

It is found in the mitochondrion outer membrane. The protein resides in the endoplasmic reticulum membrane. Its function is as follows. Component of the ERMES/MDM complex, which serves as a molecular tether to connect the endoplasmic reticulum (ER) and mitochondria. Components of this complex are involved in the control of mitochondrial shape and protein biogenesis, and function in nonvesicular lipid trafficking between the ER and mitochondria. MDM12 is required for the interaction of the ER-resident membrane protein MMM1 and the outer mitochondrial membrane-resident beta-barrel protein MDM10. The MDM12-MMM1 subcomplex functions in the major beta-barrel assembly pathway that is responsible for biogenesis of all mitochondrial outer membrane beta-barrel proteins, and acts in a late step after the SAM complex. The MDM10-MDM12-MMM1 subcomplex further acts in the TOM40-specific pathway after the action of the MDM12-MMM1 complex. Essential for establishing and maintaining the structure of mitochondria and maintenance of mtDNA nucleoids. The protein is Mitochondrial distribution and morphology protein 12 of Cryptococcus neoformans var. neoformans serotype D (strain JEC21 / ATCC MYA-565) (Filobasidiella neoformans).